The sequence spans 982 residues: MEQEHVMTLKEWMEWNAHKQLQKLQSTHPELHVDIPEDIPLVPEKVPLKMRMRYRCYTLCATSTRIMFWILFFLLCFSIVTLSTIISILRYQWKEAITHPGPVLSWQVTNSHVTMGGNTSSSSRRRRDIQYHKLPVEVNISGIPQGLFFAPQPKPIFHKERTLGLSQVILIDSDTITQGHIKQQKAYLVSTINEEMEQLQKTVLPFDLPIKDPLTQKEYIEKRCFQKYGHCYVIAFNGNKVWPSQDLIQDQCPLPPRFGNNLKYRNHTIWKYYIPLPFKVSSNWTRVESYGNIRIGSFKVPDEFRQNATHGIFCSDALYSNWYPRDLPSSVQQSFAQAYITKVLMKRKKQPTLRDIAFPKELSPVGSGMLFRPINPYDICNMPRAVLLLNKTYYTFSLWEGDCGYYQHNLTLHPACKNFNRTRQDHPYACRFWRNKYDSESVQCYNNDMCYYRPLYDGTENTEDWGWLAYTDSFPSPICIEEKRIWKKNYTLSSVLAECVNQAMEYGIDEVLSKLDLIFGNLTHQSADEAFIPVNNFTWPRYEKQNKQQKTSCERKKGRRQRRSVSTENLRRIQEAGLGLANAITTVAKISDLNDQKLAKGVHLLRDHVVTLMEANLDDIVSLGEGIQIEHIHNHLTSLKLLTLENRIDWRFINDSWIQEELGVSDNIMKVIRKTARCIPYNVKQTRNLNTSTAWEIYLYYEIIIPTTIYTQNWNIKNLGHLVRNAGYLSKVWIQQPFEVLNQECGTNIYLHMEECVDQDYIICEEVMELPPCGNGTGSDCPVLTKPLTDEYLEIEPLKNGSYLVLSSTTDCGIPAYVPVVITVNDTISCFDKEFKRPLKQELKVTKYAPSVPQLELRVPRLTSLIAKIKGIQIEITSSWETIKEQVARAKAELLRLDLHEGDYPEWLQLLGEATKDVWPTISNFVSGIGNFIKDTAGGIFGTAFSFLGYVKPVLLGFVIIFCIILIIKIIGWLQNTRKKDQ.

Over 1 to 63 the chain is Cytoplasmic; the sequence is MEQEHVMTLK…YRCYTLCATS (63 aa). The helical; Signal-anchor for type III membrane protein transmembrane segment at 64–86 threads the bilayer; that stretch reads TRIMFWILFFLLCFSIVTLSTII. Over 87–953 the chain is Lumenal; that stretch reads SILRYQWKEA…AFSFLGYVKP (867 aa). 11 N-linked (GlcNAc...) asparagine; by host glycosylation sites follow: N118, N139, N266, N283, N307, N390, N409, N420, N489, N521, and N536. Residues 548-567 form a disordered region; it reads QQKTSCERKKGRRQRRSVST. Positions 569 to 591 are fusion peptide; sequence NLRRIQEAGLGLANAITTVAKIS. N-linked (GlcNAc...) asparagine; by host glycans are attached at residues N654, N690, N775, N800, and N825. Residues 954-974 form a helical membrane-spanning segment; sequence VLLGFVIIFCIILIIKIIGWL. Residues 975-982 lie on the Cytoplasmic side of the membrane; sequence QNTRKKDQ. An Endoplasmic reticulum retention signal motif is present at residues 978–980; that stretch reads RKK.

The mature envelope protein consists of a trimer of SU-TM heterodimers. The N-terminus of leader peptide specifically interacts with Gag protein. This specific interaction between Gag protein and Env glycoprotein may allow particle egress. In terms of processing, envelope glycoproteins are synthesized as an inactive precursor that is processed by host furin or a furin-like protease to yield a functional hetero-oligomeric complex. A 9 kDa protein corresponding to the N-terminus of the leader peptide may arise through low efficient cleavage by host signal peptidase. The transmembrane protein and the surface protein are N-glycosylated.

The protein resides in the host endoplasmic reticulum membrane. It is found in the virion membrane. The surface protein (SU) attaches the virus to the host cell by binding to the cell receptor. This interaction triggers the refolding of transmembrane protein (TM) and is thought to activate its fusogenic potential by unmasking its fusion peptide. Its function is as follows. The transmembrane protein (TM) acts as a class I viral fusion protein. Under the current model, the protein has at least 3 conformational states: pre-fusion native state, pre-hairpin intermediate state, and post-fusion hairpin state. During viral and target cell membrane fusion, the coiled coil regions (heptad repeats) assume a trimer-of-hairpins structure, positioning the fusion peptide in close proximity to the C-terminal region of the ectodomain. The formation of this structure appears to drive apposition and subsequent fusion of viral and target cell membranes. Membranes fusion leads to delivery of the nucleocapsid into the cytoplasm. Functionally, the leader peptide is a component of released, infectious virions and is required for particle budding. The sequence is that of Envelope glycoprotein gp130 (env) from Feline foamy virus (FFV).